The chain runs to 195 residues: Xanthine phosphoribosyltransferase (195 aa).

2 residues coordinate xanthine: L20 and N27. A128–A132 contributes to the 5-phospho-alpha-D-ribose 1-diphosphate binding site. K156 contributes to the xanthine binding site.

Belongs to the purine/pyrimidine phosphoribosyltransferase family. Xpt subfamily. In terms of assembly, homodimer.

It localises to the cytoplasm. The enzyme catalyses XMP + diphosphate = xanthine + 5-phospho-alpha-D-ribose 1-diphosphate. It functions in the pathway purine metabolism; XMP biosynthesis via salvage pathway; XMP from xanthine: step 1/1. Functionally, converts the preformed base xanthine, a product of nucleic acid breakdown, to xanthosine 5'-monophosphate (XMP), so it can be reused for RNA or DNA synthesis. This is Xanthine phosphoribosyltransferase from Latilactobacillus sakei subsp. sakei (strain 23K) (Lactobacillus sakei subsp. sakei).